A 1031-amino-acid polypeptide reads, in one-letter code: Zinc finger protein 445 (1031 aa).

The interval 1 to 43 is disordered; it reads MPPGRWHAAYPAQAQSSRERGRLQTVKKEEEDESYTPVQAARP. Residues 17 to 29 show a composition bias toward basic and acidic residues; it reads SRERGRLQTVKKE. Residue lysine 28 forms a Glycyl lysine isopeptide (Lys-Gly) (interchain with G-Cter in SUMO1) linkage. The region spanning 55–137 is the SCAN box domain; sequence RQLFRQLRYH…ALLEELQRDL (83 aa). In terms of domain architecture, KRAB spans 234 to 304; the sequence is MTFKDVEVTF…NMQAAQPKGN (71 aa). Glycyl lysine isopeptide (Lys-Gly) (interchain with G-Cter in SUMO2) cross-links involve residues lysine 317, lysine 374, lysine 375, and lysine 399. C2H2-type zinc fingers lie at residues 485–507, 513–535, and 541–563; these read FKCS…QRLH, FKCR…EKIH, and YKCD…RETH. Lysine 567 participates in a covalent cross-link: Glycyl lysine isopeptide (Lys-Gly) (interchain with G-Cter in SUMO2). C2H2-type zinc fingers lie at residues 597–619 and 625–647; these read FDCS…QRIH and YKCT…MRLH. Residue lysine 654 forms a Glycyl lysine isopeptide (Lys-Gly) (interchain with G-Cter in SUMO2) linkage. 2 C2H2-type zinc fingers span residues 681–703 and 709–731; these read FLCQ…QRIH and YQCS…KKKH. Residues lysine 736 and lysine 758 each participate in a glycyl lysine isopeptide (Lys-Gly) (interchain with G-Cter in SUMO2) cross-link. C2H2-type zinc fingers lie at residues 762–784, 790–812, 840–862, 868–890, and 896–918; these read YKCS…QRVH, YKCR…QRIH, FWCQ…KGIH, YKCN…QRIH, and FKCQ…QRKH. A disordered region spans residues 911–939; sequence LSSHQRKHTRAAQAERSPPARSSSQDTKL. Residues lysine 938, lysine 956, and lysine 975 each participate in a glycyl lysine isopeptide (Lys-Gly) (interchain with G-Cter in SUMO2) cross-link. 2 consecutive C2H2-type zinc fingers follow at residues 978–1000 and 1006–1028; these read HKCS…KRFH and FKCS…MKNH.

Belongs to the krueppel C2H2-type zinc-finger protein family.

Its subcellular location is the nucleus. Functionally, transcription regulator required to maintain maternal and paternal gene imprinting, a process by which gene expression is restricted in a parent of origin-specific manner by epigenetic modification of genomic DNA and chromatin, including DNA methylation. Acts by controlling DNA methylation during the earliest multicellular stages of development at multiple imprinting control regions (ICRs). Acts together with ZFP57, but seems to be the major factor in human early embryonic imprinting maintenance. In contrast, in mice, ZFP57 plays the predominant role in imprinting maintenance. The polypeptide is Zinc finger protein 445 (Homo sapiens (Human)).